The primary structure comprises 212 residues: uncharacterized protein (212 aa).

Residues G53, E74, and D97 each coordinate S-adenosyl-L-methionine.

The protein belongs to the methyltransferase superfamily. YrrT family.

In terms of biological role, could be a S-adenosyl-L-methionine-dependent methyltransferase. This is an uncharacterized protein from Bacillus cereus (strain 03BB102).